A 147-amino-acid chain; its full sequence is Small ribosomal subunit protein uS12 (147 aa).

This sequence belongs to the universal ribosomal protein uS12 family. In terms of assembly, part of the 30S ribosomal subunit.

Its function is as follows. With S4 and S5 plays an important role in translational accuracy. Located at the interface of the 30S and 50S subunits. In Pyrobaculum arsenaticum (strain DSM 13514 / JCM 11321 / PZ6), this protein is Small ribosomal subunit protein uS12.